The primary structure comprises 187 residues: UPF0301 protein Noc_0368 (187 aa).

This sequence belongs to the UPF0301 (AlgH) family.

This is UPF0301 protein Noc_0368 from Nitrosococcus oceani (strain ATCC 19707 / BCRC 17464 / JCM 30415 / NCIMB 11848 / C-107).